A 262-amino-acid chain; its full sequence is tRNA pseudouridine synthase A (262 aa).

Residue Asp-51 is the Nucleophile of the active site. Tyr-106 lines the substrate pocket.

The protein belongs to the tRNA pseudouridine synthase TruA family.

It catalyses the reaction uridine(38/39/40) in tRNA = pseudouridine(38/39/40) in tRNA. Its function is as follows. Formation of pseudouridine at positions 38, 39 and 40 in the anticodon stem and loop of transfer RNAs. This chain is tRNA pseudouridine synthase A, found in Pyrococcus horikoshii (strain ATCC 700860 / DSM 12428 / JCM 9974 / NBRC 100139 / OT-3).